The chain runs to 431 residues: Divalent metal cation transporter MntH (431 aa).

11 helical membrane-spanning segments follow: residues leucine 33–phenylalanine 53, serine 61–leucine 81, tryptophan 110–glycine 130, isoleucine 141–glutamate 161, threonine 170–alanine 190, alanine 211–histidine 231, isoleucine 258–alanine 278, glycine 307–alanine 327, isoleucine 347–leucine 367, valine 368–isoleucine 388, and isoleucine 406–threonine 426.

The protein belongs to the NRAMP family.

The protein localises to the cell membrane. Functionally, h(+)-stimulated, divalent metal cation uptake system. The polypeptide is Divalent metal cation transporter MntH (Clostridium acetobutylicum (strain ATCC 824 / DSM 792 / JCM 1419 / IAM 19013 / LMG 5710 / NBRC 13948 / NRRL B-527 / VKM B-1787 / 2291 / W)).